The primary structure comprises 231 residues: 2,3-bisphosphoglycerate-dependent phosphoglycerate mutase (231 aa).

Residues 8–15 (RHGESEWN), 21–22 (TG), R60, 87–90 (ERHY), K98, 114–115 (RR), and 183–184 (GN) contribute to the substrate site. The active-site Tele-phosphohistidine intermediate is the H9. E87 (proton donor/acceptor) is an active-site residue.

The protein belongs to the phosphoglycerate mutase family. BPG-dependent PGAM subfamily.

It catalyses the reaction (2R)-2-phosphoglycerate = (2R)-3-phosphoglycerate. Its pathway is carbohydrate degradation; glycolysis; pyruvate from D-glyceraldehyde 3-phosphate: step 3/5. Its function is as follows. Catalyzes the interconversion of 2-phosphoglycerate and 3-phosphoglycerate. The protein is 2,3-bisphosphoglycerate-dependent phosphoglycerate mutase of Streptococcus equi subsp. zooepidemicus (strain H70).